Here is a 408-residue protein sequence, read N- to C-terminus: F-box A protein 155 (408 aa).

The segment at 1–22 is disordered; it reads MSDRGSDQSSSSSDSAQHIPPK.

Belongs to the FTH family.

This chain is F-box A protein 155 (fbxa-155), found in Caenorhabditis elegans.